Consider the following 298-residue polypeptide: N-acetylmuramic acid 6-phosphate etherase (298 aa).

Residues 55 to 218 (IHAQVSGGGR…STGLMIKSGK (164 aa)) enclose the SIS domain. The Proton donor role is filled by Glu83. The active site involves Glu114.

The protein belongs to the GCKR-like family. MurNAc-6-P etherase subfamily. In terms of assembly, homodimer.

The enzyme catalyses N-acetyl-D-muramate 6-phosphate + H2O = N-acetyl-D-glucosamine 6-phosphate + (R)-lactate. It functions in the pathway amino-sugar metabolism; 1,6-anhydro-N-acetylmuramate degradation. The protein operates within amino-sugar metabolism; N-acetylmuramate degradation. Its pathway is cell wall biogenesis; peptidoglycan recycling. Its function is as follows. Specifically catalyzes the cleavage of the D-lactyl ether substituent of MurNAc 6-phosphate, producing GlcNAc 6-phosphate and D-lactate. Together with AnmK, is also required for the utilization of anhydro-N-acetylmuramic acid (anhMurNAc) either imported from the medium or derived from its own cell wall murein, and thus plays a role in cell wall recycling. This is N-acetylmuramic acid 6-phosphate etherase from Shigella dysenteriae serotype 1 (strain Sd197).